A 420-amino-acid polypeptide reads, in one-letter code: DNA primase small subunit (420 aa).

N-acetylmethionine is present on methionine 1. Residues glutamate 44, aspartate 109, and aspartate 111 contribute to the active site. The Mg(2+) site is built by aspartate 109 and aspartate 111. Aspartate 109 and aspartate 111 together coordinate Mn(2+). Residue aspartate 109–aspartate 111 coordinates a ribonucleoside 5'-triphosphate. Positions 121, 122, 128, and 131 each coordinate Zn(2+). Positions cysteine 121–cysteine 131 match the Zinc knuckle motif motif. Serine 160–histidine 166 serves as a coordination point for a ribonucleoside 5'-triphosphate. Aspartate 306 contributes to the Mg(2+) binding site. Aspartate 306 is a binding site for Mn(2+). A ribonucleoside 5'-triphosphate-binding positions include histidine 315–lysine 318 and histidine 324. The segment covering asparagine 363–glutamate 373 has biased composition (acidic residues). The interval asparagine 363–aspartate 382 is disordered.

The protein belongs to the eukaryotic-type primase small subunit family. In terms of assembly, heterodimer of a catalytic subunit PRIM1 and a regulatory subunit PRIM2, also known as the DNA primase complex. Interacts with PRIM2 (via C-terminus). Component of the alpha DNA polymerase complex (also known as the alpha DNA polymerase-primase complex) consisting of four subunits: the catalytic subunit POLA1, the regulatory subunit POLA2, and the primase complex subunits PRIM1 and PRIM2 respectively. Within the complex, POLA1 directly interacts with PRIM2. It depends on Mg(2+) as a cofactor. Requires Mn(2+) as cofactor.

The catalysed reaction is ssDNA + n NTP = ssDNA/pppN(pN)n-1 hybrid + (n-1) diphosphate.. With respect to regulation, the presence of the regulatory subunit PRIM2/p58 accelerates the kinetics of initiation and primer extension. Inhibited by arabinose nucleoside derivatives such as fludarabine and vidarabine. Functionally, catalytic subunit of the DNA primase complex and component of the DNA polymerase alpha complex (also known as the alpha DNA polymerase-primase complex - primosome/replisome) which play an essential role in the initiation of DNA synthesis. During the S phase of the cell cycle, the DNA polymerase alpha complex (composed of a catalytic subunit POLA1, an accessory subunit POLA2 and two primase subunits, the catalytic subunit PRIM1 and the regulatory subunit PRIM2) is recruited to DNA at the replicative forks via direct interactions with MCM10 and WDHD1. The primase subunit of the polymerase alpha complex initiates DNA synthesis by oligomerising short RNA primers on both leading and lagging strands. These primers are initially extended by the polymerase alpha catalytic subunit and subsequently transferred to polymerase delta and polymerase epsilon for processive synthesis on the lagging and leading strand, respectively. In the primase complex, both subunits are necessary for the initial di-nucleotide formation, but the extension of the primer depends only on the catalytic subunit. Synthesizes 9-mer RNA primers (also known as the 'unit length' RNA primers). Incorporates only ribonucleotides in the presence of ribo- and deoxy-nucleotide triphosphates (rNTPs, dNTPs). Requires template thymine or cytidine to start the RNA primer synthesis, with an adenine or guanine at its 5'-end. Binds single stranded DNA. The sequence is that of DNA primase small subunit (PRIM1) from Homo sapiens (Human).